The primary structure comprises 466 residues: Putative chitinase 2 (466 aa).

The N-terminal stretch at 1–17 (MYLTIWLVPLLAVGTWG) is a signal peptide. Residues 20–380 (FNRFCHYNSW…MAVIHGLNAY (361 aa)) enclose the GH18 domain. Cys-24 and Cys-49 are oxidised to a cystine. Glu-141 (proton donor) is an active-site residue. Residues 395–447 (YNKKILRARVSLRNYRRRNQQGKVAEMEQRIRNLEQELQQSMGNMAYERQQAQ) adopt a coiled-coil conformation.

This sequence belongs to the glycosyl hydrolase 18 family. Prismatic layer of shell (at protein level). Expressed primarily in the mantle with highest level in the mantle edge and lower level in the mantle pallium.

It localises to the secreted. The enzyme catalyses Random endo-hydrolysis of N-acetyl-beta-D-glucosaminide (1-&gt;4)-beta-linkages in chitin and chitodextrins.. The polypeptide is Putative chitinase 2 (Margaritifera margaritifera (Freshwater pearl mussel)).